Reading from the N-terminus, the 177-residue chain is Cytochrome c oxidase assembly protein CtaG (177 aa).

At 1 to 8 the chain is on the cytoplasmic side; the sequence is MTQKAKNT. The helical; Signal-anchor for type II membrane protein transmembrane segment at 9–29 threads the bilayer; sequence IYLLILIILSMLCLVYASVPL. Residues 30–177 lie on the Periplasmic side of the membrane; sequence YSIFCKVTGY…TFFKYKENTK (148 aa).

It belongs to the COX11/CtaG family.

Its subcellular location is the cell inner membrane. In terms of biological role, exerts its effect at some terminal stage of cytochrome c oxidase synthesis, probably by being involved in the insertion of the copper B into subunit I. The chain is Cytochrome c oxidase assembly protein CtaG from Ehrlichia ruminantium (strain Welgevonden).